Reading from the N-terminus, the 119-residue chain is Large ribosomal subunit protein uL18 (119 aa).

The protein belongs to the universal ribosomal protein uL18 family. Part of the 50S ribosomal subunit; part of the 5S rRNA/L5/L18/L25 subcomplex. Contacts the 5S and 23S rRNAs.

Functionally, this is one of the proteins that bind and probably mediate the attachment of the 5S RNA into the large ribosomal subunit, where it forms part of the central protuberance. In Endomicrobium trichonymphae, this protein is Large ribosomal subunit protein uL18.